Here is a 305-residue protein sequence, read N- to C-terminus: Axin interactor, dorsalization-associated protein A (305 aa).

Residues 153–220 are axin-binding; sequence GTLLPRLPSE…RKEDTYVHFN (68 aa). In terms of domain architecture, C2 Aida-type spans 156–303; the sequence is LPRLPSEPGM…LYLHLLQTLL (148 aa).

It belongs to the AIDA family.

Functionally, acts as a ventralizing factor during embryogenesis. Inhibits axin-mediated JNK activation by binding axin and disrupting axin homodimerization. This in turn antagonizes a Wnt/beta-catenin-independent dorsalization pathway activated by axin/JNK-signaling. The chain is Axin interactor, dorsalization-associated protein A (aida-a) from Xenopus laevis (African clawed frog).